The following is a 181-amino-acid chain: Protein Syd (181 aa).

The protein belongs to the Syd family.

The protein localises to the cell inner membrane. Interacts with the SecY protein in vivo. May bind preferentially to an uncomplexed state of SecY, thus functioning either as a chelating agent for excess SecY in the cell or as a regulatory factor that negatively controls the translocase function. This Escherichia coli O81 (strain ED1a) protein is Protein Syd.